A 238-amino-acid polypeptide reads, in one-letter code: Fatty acid metabolism regulator protein (238 aa).

Positions 6–74 constitute an HTH gntR-type domain; it reads QSPAGFAEEY…HGKPTKVNNF (69 aa). A DNA-binding region (H-T-H motif) is located at residues 34 to 53; sequence ERELSELIGVTRTTLREVLQ.

As to quaternary structure, homodimer.

Its subcellular location is the cytoplasm. Functionally, multifunctional regulator of fatty acid metabolism. In Erwinia tasmaniensis (strain DSM 17950 / CFBP 7177 / CIP 109463 / NCPPB 4357 / Et1/99), this protein is Fatty acid metabolism regulator protein.